The primary structure comprises 234 residues: UPF0758 protein Smal_0281 (234 aa).

Residues 103–225 (VGNNPAAVGR…PVSFAERGLL (123 aa)) enclose the MPN domain. 3 residues coordinate Zn(2+): His174, His176, and Asp187. The JAMM motif signature appears at 174–187 (HNHPSGDPEPSSAD).

It belongs to the UPF0758 family.

This is UPF0758 protein Smal_0281 from Stenotrophomonas maltophilia (strain R551-3).